Reading from the N-terminus, the 128-residue chain is Sulfurtransferase TusD (128 aa).

C78 serves as the catalytic Cysteine persulfide intermediate.

The protein belongs to the DsrE/TusD family. Heterohexamer, formed by a dimer of trimers. The hexameric TusBCD complex contains 2 copies each of TusB, TusC and TusD. The TusBCD complex interacts with TusE.

The protein resides in the cytoplasm. Functionally, part of a sulfur-relay system required for 2-thiolation of 5-methylaminomethyl-2-thiouridine (mnm(5)s(2)U) at tRNA wobble positions. Accepts sulfur from TusA and transfers it in turn to TusE. The protein is Sulfurtransferase TusD of Escherichia coli O139:H28 (strain E24377A / ETEC).